We begin with the raw amino-acid sequence, 537 residues long: MFS-type transporter qa-x (537 aa).

Residues 1 to 26 (MTLLALKEDRPTPKAVYNWRVYTCAA) are Cytoplasmic-facing. A helical membrane pass occupies residues 27 to 47 (IASFASCMIGYDSAFIGTTLA). The Extracellular portion of the chain corresponds to 48–74 (LPSFTKEFDFASYTPGALALLQSNIVS). The helical transmembrane segment at 75–95 (VYQAGAFFGCLFAYATSYFLG) threads the bilayer. Over 96 to 98 (RRK) the chain is Cytoplasmic. Residues 99 to 119 (SLIAFSVVFIIGAAIMLAADG) traverse the membrane as a helical segment. The Extracellular portion of the chain corresponds to 120 to 131 (QGRGIDPIIAGR). The chain crosses the membrane as a helical span at residues 132-152 (VLAGIGVGGASNMVPIYISEL). Residues 153 to 160 (APPAVRGR) lie on the Cytoplasmic side of the membrane. A helical membrane pass occupies residues 161–181 (LVGIYELGWQIGGLVGFWINY). Over 182–195 (GVNTTMAPTRSQWL) the chain is Extracellular. N-linked (GlcNAc...) asparagine glycosylation occurs at asparagine 184. A helical transmembrane segment spans residues 196–216 (IPFAVQLIPAGLLFLGSFWIP). Residues 217–285 (ESPRWLYANG…SLKQRKVQWR (69 aa)) are Cytoplasmic-facing. The chain crosses the membrane as a helical span at residues 286–306 (FFLGGMLFFWQNGSGINAINY). Topologically, residues 307 to 327 (YSPTVFRSIGITGTDTGFLTT) are extracellular. A helical membrane pass occupies residues 328–349 (GIFGVVKMVLTIIWLLWLVDLV). Residues 350–352 (GRR) are Cytoplasmic-facing. Residues 353–373 (RILFIGAAGGSLCMWFIGAYI) form a helical membrane-spanning segment. The Extracellular segment spans residues 374–389 (KIADPGSNKAEDAKLT). Residues 390 to 410 (SGGIAAIFFFYLWTAFYTPSW) traverse the membrane as a helical segment. Residues 411 to 435 (NGTPWVINSEMFDQNTRSLGQASAA) are Cytoplasmic-facing. A helical transmembrane segment spans residues 436-456 (ANNWFWNFIISRFTPQMFIKM). At 457 to 458 (EY) the chain is on the extracellular side. The chain crosses the membrane as a helical span at residues 459–479 (GVYFFFASLMLLSIVFIYFFL). Residues 480-537 (PETKSIPLEAMDRLFEIKPVQNANKNLMAELNFDRNPEREESSSLDDKDRVTQTENAV) are Cytoplasmic-facing. Basic and acidic residues predominate over residues 514–531 (RNPEREESSSLDDKDRVT). The interval 514 to 537 (RNPEREESSSLDDKDRVTQTENAV) is disordered.

This sequence belongs to the major facilitator superfamily. Sugar transporter (TC 2.A.1.1) family.

It localises to the membrane. MFS-type transporter; part of the qa gene cluster that mediates the catabolism of quinic acid (QA) and as such, allows the use of QA as a sole carbon source. Involved in the upatke of QA. The qa cluster encodes 3 inducible enymes (qa-2, qa-3 and qa-4) catalyzing the first three reactions in the catabolism of quinic acid to protocatechuic acid (also known as 3,4-Dihydroxybenzoic acid). The sequence is that of MFS-type transporter qa-x from Neurospora crassa (strain ATCC 24698 / 74-OR23-1A / CBS 708.71 / DSM 1257 / FGSC 987).